A 100-amino-acid chain; its full sequence is MHLYTYLYLLVPLVTFHLILGTGTLDDGGALTERRSADATALKAEPVLLQKSAARSTDDNGKDRLTQMKRILKQRGNKARGEEELQENQELIREKSNGKR.

A signal peptide spans 1–21 (MHLYTYLYLLVPLVTFHLILG). Residues 22-80 (TGTLDDGGALTERRSADATALKAEPVLLQKSAARSTDDNGKDRLTQMKRILKQRGNKAR) constitute a propeptide that is removed on maturation. The disordered stretch occupies residues 52 to 100 (SAARSTDDNGKDRLTQMKRILKQRGNKARGEEELQENQELIREKSNGKR). The span at 56–66 (STDDNGKDRLT) shows a compositional bias: basic and acidic residues. Residues 61 to 80 (GKDRLTQMKRILKQRGNKAR) form a gamma-carboxylation recognition sequence that plays a role in the conversion of Glu to carboxy-Glu (Gla) region. Glu83 contacts a divalent metal cation. Residues Glu83, Glu84, Glu87, Glu90, and Glu94 each carry the 4-carboxyglutamate modification. 3 residues coordinate a divalent metal cation: Glu87, Glu90, and Glu94. Positions 90 to 100 (ELIREKSNGKR) are enriched in basic and acidic residues. The residue at position 97 (Asn97) is an Asparagine amide.

This sequence belongs to the conotoxin B superfamily. It depends on Ca(2+) as a cofactor. Mg(2+) is required as a cofactor. In terms of tissue distribution, expressed by the venom duct.

The protein resides in the secreted. In terms of biological role, conantokins inhibit N-methyl-D-aspartate (NMDA) receptors. This toxin is selective for the NR2B/GRIN2B subunit. Induces sleep-like symptoms in young mice and hyperactivity in older mice. This is Conantokin-G from Conus geographus (Geography cone).